A 371-amino-acid polypeptide reads, in one-letter code: Isopentenyl-diphosphate delta-isomerase (371 aa).

Position 9–10 (9–10) interacts with substrate; it reads RK. FMN contacts are provided by residues Thr-66, 67-69, Ser-100, and Asn-128; that span reads GMT. 100–102 serves as a coordination point for substrate; it reads SQR. Position 167 (Gln-167) interacts with substrate. Glu-168 contributes to the Mg(2+) binding site. FMN is bound by residues Lys-199, Ser-224, Thr-229, 278–280, and 299–300; these read GMR and AL.

The protein belongs to the IPP isomerase type 2 family. In terms of assembly, homooctamer. Dimer of tetramers. FMN serves as cofactor. It depends on NADPH as a cofactor. The cofactor is Mg(2+).

It localises to the cytoplasm. The enzyme catalyses isopentenyl diphosphate = dimethylallyl diphosphate. Its function is as follows. Involved in the biosynthesis of isoprenoids. Catalyzes the 1,3-allylic rearrangement of the homoallylic substrate isopentenyl (IPP) to its allylic isomer, dimethylallyl diphosphate (DMAPP). This is Isopentenyl-diphosphate delta-isomerase from Pyrococcus horikoshii (strain ATCC 700860 / DSM 12428 / JCM 9974 / NBRC 100139 / OT-3).